Here is an 85-residue protein sequence, read N- to C-terminus: U4-theraphotoxin-Hhn1a (85 aa).

The signal sequence occupies residues 1 to 22 (MKVTLIAILTCAAVLVLHTTAA). A propeptide spanning residues 23–48 (EELEAESQLMEVGMPDTELAAVDEER) is cleaved from the precursor. Intrachain disulfides connect cysteine 52–cysteine 66, cysteine 56–cysteine 77, and cysteine 71–cysteine 82.

It belongs to the neurotoxin 12 (Hwtx-2) family. 02 (Hwtx-2) subfamily. Monomer. Expressed by the venom gland.

It is found in the secreted. Its function is as follows. Neurotoxin active on both insects and mammals. The sequence is that of U4-theraphotoxin-Hhn1a from Cyriopagopus hainanus (Chinese bird spider).